A 101-amino-acid chain; its full sequence is Small ribosomal subunit protein bS18c (101 aa).

The segment covering 1 to 19 (MDKSKQPFRKSKRSFRRRL) has biased composition (basic residues). The tract at residues 1-26 (MDKSKQPFRKSKRSFRRRLPPIGSGD) is disordered.

The protein belongs to the bacterial ribosomal protein bS18 family. Part of the 30S ribosomal subunit.

The protein localises to the plastid. It localises to the chloroplast. This Phalaenopsis aphrodite subsp. formosana (Moth orchid) protein is Small ribosomal subunit protein bS18c.